A 233-amino-acid chain; its full sequence is Large ribosomal subunit protein uL1 (233 aa).

Belongs to the universal ribosomal protein uL1 family. Part of the 50S ribosomal subunit.

Functionally, binds directly to 23S rRNA. The L1 stalk is quite mobile in the ribosome, and is involved in E site tRNA release. Its function is as follows. Protein L1 is also a translational repressor protein, it controls the translation of the L11 operon by binding to its mRNA. The protein is Large ribosomal subunit protein uL1 of Geobacillus sp. (strain WCH70).